The chain runs to 513 residues: Bifunctional purine biosynthesis protein PurH (513 aa).

The 144-residue stretch at 1-144 folds into the MGS-like domain; the sequence is MKRALISVSD…KNYQDVTVVT (144 aa).

The protein belongs to the PurH family.

The enzyme catalyses (6R)-10-formyltetrahydrofolate + 5-amino-1-(5-phospho-beta-D-ribosyl)imidazole-4-carboxamide = 5-formamido-1-(5-phospho-D-ribosyl)imidazole-4-carboxamide + (6S)-5,6,7,8-tetrahydrofolate. It catalyses the reaction IMP + H2O = 5-formamido-1-(5-phospho-D-ribosyl)imidazole-4-carboxamide. The protein operates within purine metabolism; IMP biosynthesis via de novo pathway; 5-formamido-1-(5-phospho-D-ribosyl)imidazole-4-carboxamide from 5-amino-1-(5-phospho-D-ribosyl)imidazole-4-carboxamide (10-formyl THF route): step 1/1. It participates in purine metabolism; IMP biosynthesis via de novo pathway; IMP from 5-formamido-1-(5-phospho-D-ribosyl)imidazole-4-carboxamide: step 1/1. This is Bifunctional purine biosynthesis protein PurH from Lactobacillus acidophilus (strain ATCC 700396 / NCK56 / N2 / NCFM).